The following is a 602-amino-acid chain: Elongation factor 4 (602 aa).

Residues 8-190 enclose the tr-type G domain; it reads DLIRNFSIVA…AIVHRLPPPK (183 aa). Residues 20-25 and 137-140 each bind GTP; these read DHGKST and NKID.

It belongs to the TRAFAC class translation factor GTPase superfamily. Classic translation factor GTPase family. LepA subfamily.

Its subcellular location is the cell inner membrane. The catalysed reaction is GTP + H2O = GDP + phosphate + H(+). In terms of biological role, required for accurate and efficient protein synthesis under certain stress conditions. May act as a fidelity factor of the translation reaction, by catalyzing a one-codon backward translocation of tRNAs on improperly translocated ribosomes. Back-translocation proceeds from a post-translocation (POST) complex to a pre-translocation (PRE) complex, thus giving elongation factor G a second chance to translocate the tRNAs correctly. Binds to ribosomes in a GTP-dependent manner. In Cereibacter sphaeroides (strain KD131 / KCTC 12085) (Rhodobacter sphaeroides), this protein is Elongation factor 4.